A 408-amino-acid chain; its full sequence is Eukaryotic initiation factor 4A-II (408 aa).

A disordered region spans residues Met-1–Asp-22. The Q motif signature appears at Asp-34 to Gln-62. The region spanning Ile-65–Ile-236 is the Helicase ATP-binding domain. Residue Gln-77–Lys-84 coordinates ATP. Residue Thr-160 is modified to Phosphothreonine. A DEAD box motif is present at residues Leu-183–Ala-186. One can recognise a Helicase C-terminal domain in the interval Gly-247 to Ile-408.

Belongs to the DEAD box helicase family. eIF4A subfamily. As to quaternary structure, eIF4F is a multi-subunit complex, the composition of which varies with external and internal environmental conditions. It is composed of at least EIF4A, EIF4E and EIF4G1/EIFFG3. Interacts with EIF4E. May interact with NOM1.

The enzyme catalyses ATP + H2O = ADP + phosphate + H(+). ATP-dependent RNA helicase which is a subunit of the eIF4F complex involved in cap recognition and is required for mRNA binding to ribosome. In the current model of translation initiation, eIF4A unwinds RNA secondary structures in the 5'-UTR of mRNAs which is necessary to allow efficient binding of the small ribosomal subunit, and subsequent scanning for the initiator codon. The polypeptide is Eukaryotic initiation factor 4A-II (EIF4A2) (Macaca fascicularis (Crab-eating macaque)).